The following is a 216-amino-acid chain: Cytochrome c biogenesis ATP-binding export protein CcmA (216 aa).

The region spanning 11–216 is the ABC transporter domain; that stretch reads LSANELTCIR…RKITLDYRFV (206 aa). 43–50 is a binding site for ATP; it reads GPNGAGKT.

It belongs to the ABC transporter superfamily. CcmA exporter (TC 3.A.1.107) family. The complex is composed of two ATP-binding proteins (CcmA) and two transmembrane proteins (CcmB).

It localises to the cell inner membrane. The enzyme catalyses heme b(in) + ATP + H2O = heme b(out) + ADP + phosphate + H(+). In terms of biological role, part of the ABC transporter complex CcmAB involved in the biogenesis of c-type cytochromes; once thought to export heme, this seems not to be the case, but its exact role is uncertain. Responsible for energy coupling to the transport system. The chain is Cytochrome c biogenesis ATP-binding export protein CcmA from Shewanella frigidimarina (strain NCIMB 400).